A 537-amino-acid chain; its full sequence is DELLA protein GAI (537 aa).

The tract at residues 1–33 (MKRDHQEISGSGSNPAESSSIKGKLWEEDPDAG) is disordered. Low complexity predominate over residues 9–20 (SGSGSNPAESSS). The DELLA motif motif lies at 37 to 41 (DELLA). The tract at residues 131–157 (KSDPGLEITRKRAKTESSSSSSSTTTR) is disordered. Residues 147-156 (SSSSSSSTTT) are compositionally biased toward low complexity. Residues 162 to 533 (IDSQEAGVRL…RPLIAHLGLA (372 aa)) form the GRAS domain. Residues 169 to 223 (VRLVHTLMACAEAVQQDNLKLADALVKHIGLLASSQTGAMRKVATYFAEALARRI) form a leucine repeat I (LRI) region. The segment at 241-306 (QIPFYETCPY…GGPPAFRLTG (66 aa)) is VHIID. A VHIID motif is present at residues 272 to 276 (VHVID). The tract at residues 320 to 352 (QVGWKLAQLAERIGIEFEFRGFVANSLADLEPE) is leucine repeat II (LRII). The interval 364 to 454 (VAVNAVFELH…ELYLGRQICN (91 aa)) is PFYRE. Positions 372–376 (LHPLL) match the LXXLL motif motif. An SAW region spans residues 457-533 (ACEGMDRVER…RPLIAHLGLA (77 aa)).

The protein belongs to the GRAS family. DELLA subfamily. Phosphorylated. Post-translationally, ubiquitinated. Upon GA application it is ubiquitinated, leading to its subsequent degradation.

The protein localises to the nucleus. In terms of biological role, probable transcriptional regulator that acts as a repressor of the gibberellin (GA) signaling pathway. Probably acts by participating in large multiprotein complexes that represses transcription of GA-inducible genes. Upon GA application, it is degraded by the proteasome, allowing the GA signaling pathway. This chain is DELLA protein GAI (GAI), found in Gossypium hirsutum (Upland cotton).